The following is a 426-amino-acid chain: Histidine--tRNA ligase (426 aa).

This sequence belongs to the class-II aminoacyl-tRNA synthetase family. In terms of assembly, homodimer.

Its subcellular location is the cytoplasm. The enzyme catalyses tRNA(His) + L-histidine + ATP = L-histidyl-tRNA(His) + AMP + diphosphate + H(+). This Streptococcus agalactiae serotype III (strain NEM316) protein is Histidine--tRNA ligase.